The sequence spans 209 residues: LexA repressor (209 aa).

The H-T-H motif DNA-binding region spans 32–52 (VREIGKAVDLSSTSTVHGHLA). Active-site for autocatalytic cleavage activity residues include Ser-131 and Lys-169.

It belongs to the peptidase S24 family. In terms of assembly, homodimer.

The catalysed reaction is Hydrolysis of Ala-|-Gly bond in repressor LexA.. Represses a number of genes involved in the response to DNA damage (SOS response), including recA and lexA. In the presence of single-stranded DNA, RecA interacts with LexA causing an autocatalytic cleavage which disrupts the DNA-binding part of LexA, leading to derepression of the SOS regulon and eventually DNA repair. The polypeptide is LexA repressor (Enterococcus faecalis (strain ATCC 700802 / V583)).